A 145-amino-acid chain; its full sequence is Histone H2B.1, sperm (145 aa).

Positions 1–52 (MPSQKSPTKRSPTKRSPTKRSPQKGGKGGKGAKRGGKAGKRRRGVQVKRRRR) are disordered. 4 consecutive short sequence motifs (SPKK motif) follow at residues 6–9 (SPTK), 11–14 (SPTK), 16–19 (SPTK), and 21–24 (SPQK). 2 stretches are compositionally biased toward basic residues: residues 7-22 (PTKR…KRSP) and 30-52 (KGAK…RRRR). A phosphoserine mark is found at S16 and S21. Residue S132 is glycosylated (O-linked (GlcNAc) serine). Residue K140 forms a Glycyl lysine isopeptide (Lys-Gly) (interchain with G-Cter in ubiquitin) linkage.

The protein belongs to the histone H2B family. In terms of assembly, the nucleosome is a histone octamer containing two molecules each of H2A, H2B, H3 and H4 assembled in one H3-H4 heterotetramer and two H2A-H2B heterodimers. The octamer wraps approximately 147 bp of DNA. In terms of processing, monoubiquitination of Lys-140 gives a specific tag for epigenetic transcriptional activation and is also prerequisite for histone H3 'Lys-4' and 'Lys-79' methylation. Phosphorylated on SPKK motifs 3 and 4; which may regulate DNA binding. Dephosphorylated during maturation of spermatids to mature sperm and rephosphorylated at fertilization. Post-translationally, glcNAcylation at Ser-132 promotes monoubiquitination of Lys-140. It fluctuates in response to extracellular glucose, and associates with transcribed genes.

It localises to the nucleus. The protein localises to the chromosome. Core component of nucleosome. Nucleosomes wrap and compact DNA into chromatin, limiting DNA accessibility to the cellular machineries which require DNA as a template. Histones thereby play a central role in transcription regulation, DNA repair, DNA replication and chromosomal stability. DNA accessibility is regulated via a complex set of post-translational modifications of histones, also called histone code, and nucleosome remodeling. This is Histone H2B.1, sperm from Parechinus angulosus (Angulate sea urchin).